A 297-amino-acid polypeptide reads, in one-letter code: 4-hydroxy-tetrahydrodipicolinate synthase (297 aa).

Residue threonine 46 coordinates pyruvate. Tyrosine 136 acts as the Proton donor/acceptor in catalysis. Lysine 165 acts as the Schiff-base intermediate with substrate in catalysis. Pyruvate is bound at residue threonine 206.

Belongs to the DapA family. As to quaternary structure, homotetramer; dimer of dimers.

The protein localises to the cytoplasm. It catalyses the reaction L-aspartate 4-semialdehyde + pyruvate = (2S,4S)-4-hydroxy-2,3,4,5-tetrahydrodipicolinate + H2O + H(+). It participates in amino-acid biosynthesis; L-lysine biosynthesis via DAP pathway; (S)-tetrahydrodipicolinate from L-aspartate: step 3/4. Its function is as follows. Catalyzes the condensation of (S)-aspartate-beta-semialdehyde [(S)-ASA] and pyruvate to 4-hydroxy-tetrahydrodipicolinate (HTPA). In Sulfurimonas denitrificans (strain ATCC 33889 / DSM 1251) (Thiomicrospira denitrificans (strain ATCC 33889 / DSM 1251)), this protein is 4-hydroxy-tetrahydrodipicolinate synthase.